The primary structure comprises 320 residues: Adhesin MafA 1 (320 aa).

The signal sequence occupies residues 1–18 (MQARLLIPILFSVFILSA). The N-palmitoyl cysteine moiety is linked to residue C19. The S-diacylglycerol cysteine moiety is linked to residue C19. Positions 288 to 320 (HMGNSAPSVEADNSHEGYGYSDEAVRRHRQGQP) are disordered.

It belongs to the MafA family.

The protein localises to the cell outer membrane. This chain is Adhesin MafA 1 (mafA1), found in Neisseria meningitidis serogroup A / serotype 4A (strain DSM 15465 / Z2491).